The following is a 42-amino-acid chain: MTTKKSSYTYPIFTVRWLSIHALAVPTVFFLGAITAMQFIQR.

A helical membrane pass occupies residues 17–33 (WLSIHALAVPTVFFLGA). Residue His21 participates in heme binding.

The protein belongs to the PsbE/PsbF family. As to quaternary structure, heterodimer of an alpha subunit and a beta subunit. PSII is composed of 1 copy each of membrane proteins PsbA, PsbB, PsbC, PsbD, PsbE, PsbF, PsbH, PsbI, PsbJ, PsbK, PsbL, PsbM, PsbT, PsbX, PsbY, PsbZ, Psb30/Ycf12, at least 3 peripheral proteins of the oxygen-evolving complex and a large number of cofactors. It forms dimeric complexes. It depends on heme b as a cofactor.

The protein localises to the plastid. The protein resides in the chloroplast thylakoid membrane. Functionally, this b-type cytochrome is tightly associated with the reaction center of photosystem II (PSII). PSII is a light-driven water:plastoquinone oxidoreductase that uses light energy to abstract electrons from H(2)O, generating O(2) and a proton gradient subsequently used for ATP formation. It consists of a core antenna complex that captures photons, and an electron transfer chain that converts photonic excitation into a charge separation. The protein is Cytochrome b559 subunit beta of Tupiella akineta (Green alga).